A 607-amino-acid chain; its full sequence is Glutamine--fructose-6-phosphate aminotransferase [isomerizing] (607 aa).

C2 (nucleophile; for GATase activity) is an active-site residue. The 216-residue stretch at 2–217 folds into the Glutamine amidotransferase type-2 domain; the sequence is CGIIGIIGND…DGDWAVLTRN (216 aa). SIS domains follow at residues 283–422 and 455–597; these read IGID…ARGA and VCHD…VDQP. The active-site For Fru-6P isomerization activity is K602.

Homodimer.

It is found in the cytoplasm. It carries out the reaction D-fructose 6-phosphate + L-glutamine = D-glucosamine 6-phosphate + L-glutamate. Catalyzes the first step in hexosamine metabolism, converting fructose-6P into glucosamine-6P using glutamine as a nitrogen source. The chain is Glutamine--fructose-6-phosphate aminotransferase [isomerizing] from Brucella suis biovar 1 (strain 1330).